The sequence spans 953 residues: Translation initiation factor IF-2 (953 aa).

The segment at alanine 53–leucine 368 is disordered. Basic and acidic residues-rich tracts occupy residues phenylalanine 135–lysine 151 and arginine 162–glutamine 190. Residues glutamate 191–glycine 214 show a composition bias toward low complexity. Positions arginine 236–aspartate 266 are enriched in basic and acidic residues. Over residues proline 274–alanine 288 the composition is skewed to low complexity. Residues alanine 301–arginine 318 are compositionally biased toward basic and acidic residues. Over residues asparagine 332 to asparagine 341 the composition is skewed to low complexity. A tr-type G domain is found at glutamate 455–glutamate 622. The interval glycine 464–threonine 471 is G1. GTP is bound at residue glycine 464 to threonine 471. The G2 stretch occupies residues glycine 489–histidine 493. A G3 region spans residues aspartate 510–glycine 513. GTP-binding positions include aspartate 510–histidine 514 and asparagine 564–aspartate 567. The tract at residues asparagine 564–aspartate 567 is G4. The interval serine 600–lysine 602 is G5.

It belongs to the TRAFAC class translation factor GTPase superfamily. Classic translation factor GTPase family. IF-2 subfamily.

It is found in the cytoplasm. Functionally, one of the essential components for the initiation of protein synthesis. Protects formylmethionyl-tRNA from spontaneous hydrolysis and promotes its binding to the 30S ribosomal subunits. Also involved in the hydrolysis of GTP during the formation of the 70S ribosomal complex. The sequence is that of Translation initiation factor IF-2 from Streptococcus gordonii (strain Challis / ATCC 35105 / BCRC 15272 / CH1 / DL1 / V288).